Consider the following 100-residue polypeptide: Urease subunit gamma 2 (100 aa).

Belongs to the urease gamma subunit family. As to quaternary structure, heterotrimer of UreA (gamma), UreB (beta) and UreC (alpha) subunits. Three heterotrimers associate to form the active enzyme.

It localises to the cytoplasm. It carries out the reaction urea + 2 H2O + H(+) = hydrogencarbonate + 2 NH4(+). The protein operates within nitrogen metabolism; urea degradation; CO(2) and NH(3) from urea (urease route): step 1/1. The polypeptide is Urease subunit gamma 2 (Psychrobacter cryohalolentis (strain ATCC BAA-1226 / DSM 17306 / VKM B-2378 / K5)).